The sequence spans 433 residues: 3-phosphoshikimate 1-carboxyvinyltransferase (433 aa).

Lysine 22, serine 23, and arginine 27 together coordinate 3-phosphoshikimate. Position 22 (lysine 22) interacts with phosphoenolpyruvate. Residues glycine 96 and arginine 130 each contribute to the phosphoenolpyruvate site. 3-phosphoshikimate contacts are provided by serine 176, serine 177, glutamine 178, serine 204, aspartate 319, asparagine 342, and lysine 346. Residue glutamine 178 coordinates phosphoenolpyruvate. The active-site Proton acceptor is the aspartate 319. Positions 350, 394, and 419 each coordinate phosphoenolpyruvate.

This sequence belongs to the EPSP synthase family. Monomer.

Its subcellular location is the cytoplasm. It catalyses the reaction 3-phosphoshikimate + phosphoenolpyruvate = 5-O-(1-carboxyvinyl)-3-phosphoshikimate + phosphate. It functions in the pathway metabolic intermediate biosynthesis; chorismate biosynthesis; chorismate from D-erythrose 4-phosphate and phosphoenolpyruvate: step 6/7. Functionally, catalyzes the transfer of the enolpyruvyl moiety of phosphoenolpyruvate (PEP) to the 5-hydroxyl of shikimate-3-phosphate (S3P) to produce enolpyruvyl shikimate-3-phosphate and inorganic phosphate. The chain is 3-phosphoshikimate 1-carboxyvinyltransferase from Actinobacillus succinogenes (strain ATCC 55618 / DSM 22257 / CCUG 43843 / 130Z).